Consider the following 268-residue polypeptide: MYKDIKVDPAQLEAALDARLKIRAGFDKPTAGMAAGMTQVNMISVPRDWAYDFLLYAHRNPQSCPVLDVLEEGIYATKLAADSDIRTDFPRYRIWKDGEMVDEVTDAREIYNAHPDLVTFLIGCSFSFETALQEAGIEVRHIHDDTNVPMYLSNIKCEPAGRISGNMVVSMRPIPSHQISEAVKITARMPSVHGAPVHIGHPESLGIKDVNKPDFGDASRIEAGEIPVFWACGVTPQAAVMNSKIPFAISHAPGYMFITDIPDRAWIG.

It belongs to the D-glutamate cyclase family.

The sequence is that of Putative hydro-lyase A1S_1268 from Acinetobacter baumannii (strain ATCC 17978 / DSM 105126 / CIP 53.77 / LMG 1025 / NCDC KC755 / 5377).